The following is a 297-amino-acid chain: Ribosomal RNA small subunit methyltransferase H (297 aa).

Residues 30-32, Asp48, Phe75, Asp96, and Gln103 contribute to the S-adenosyl-L-methionine site; that span reads GGY.

The protein belongs to the methyltransferase superfamily. RsmH family.

It is found in the cytoplasm. It catalyses the reaction cytidine(1402) in 16S rRNA + S-adenosyl-L-methionine = N(4)-methylcytidine(1402) in 16S rRNA + S-adenosyl-L-homocysteine + H(+). Functionally, specifically methylates the N4 position of cytidine in position 1402 (C1402) of 16S rRNA. This Ehrlichia canis (strain Jake) protein is Ribosomal RNA small subunit methyltransferase H.